Reading from the N-terminus, the 283-residue chain is uncharacterized protein (283 aa).

Residues 1–10 (MEVNKTTESL) are compositionally biased toward polar residues. Disordered regions lie at residues 1 to 96 (MEVN…SGGN) and 255 to 283 (DQEG…EAQI). Basic and acidic residues-rich tracts occupy residues 14-34 (KVEH…RDVK) and 44-81 (SKQE…VSSR).

This sequence belongs to the chlamydial CPn_0705/CT_671/TC_0042 family.

This is an uncharacterized protein from Chlamydia muridarum (strain MoPn / Nigg).